We begin with the raw amino-acid sequence, 200 residues long: Probable GTP-binding protein EngB (200 aa).

The EngB-type G domain maps to 26 to 200; it reads SIPEVALAGR…IYEIAQCIKK (175 aa). Residues 34 to 41, 61 to 65, 80 to 83, 147 to 150, and 179 to 181 each bind GTP; these read GRSNVGKS, GCTRQ, DLPG, TKID, and VSS. Residues serine 41 and threonine 63 each coordinate Mg(2+).

This sequence belongs to the TRAFAC class TrmE-Era-EngA-EngB-Septin-like GTPase superfamily. EngB GTPase family. Requires Mg(2+) as cofactor.

In terms of biological role, necessary for normal cell division and for the maintenance of normal septation. The chain is Probable GTP-binding protein EngB from Ehrlichia ruminantium (strain Gardel).